The chain runs to 391 residues: Phosphoprotein (391 aa).

Residues 1–194 are N-terminus domain; the sequence is MDQFIKQDET…GSLSGATLYA (194 aa). 5 positions are modified to phosphothreonine: Thr-10, Thr-16, Thr-91, Thr-150, and Thr-165. Position 188 is a phosphoserine (Ser-188). The tract at residues 216 to 279 is multimerization; it reads ISANEIMDLL…MATVKIMDPG (64 aa). Residues 218–245 adopt a coiled-coil conformation; sequence ANEIMDLLRGMDARLQHLEQKVDKVLAQ. Phosphothreonine is present on Thr-250. Phosphoserine is present on Ser-257. Phosphothreonine occurs at positions 258 and 282. 2 positions are modified to phosphoserine: Ser-292 and Ser-294. The residue at position 298 (Thr-298) is a Phosphothreonine. Phosphoserine occurs at positions 301 and 374. The interaction with the nucleoprotein stretch occupies residues 343–391; sequence AGQKVMITKMITDCVANPQMKQAFEQRLAKASTEDALNDIKRDIIRSAI. Thr-375 is modified (phosphothreonine).

This sequence belongs to the rubulavirus/avulavirus P protein family. As to quaternary structure, homotetramer. Interacts (via multimerization domain) with polymerase L; this interaction forms the polymerase L-P complex. Interacts (via N-terminus) with N0 (via Ncore); this interaction allows P to chaperon N0 to avoid N polymerization before encapsidation. Interacts (via C-terminus) with N-RNA template; this interaction positions the polymerase on the template for both transcription and replication. Interacts with host RPS6KB1 kinase; this interaction may play a role in the viral replication and transcription.

Its subcellular location is the virion. Its function is as follows. Essential cofactor of the RNA polymerase L that plays a central role in the transcription and replication by forming the polymerase complex with RNA polymerase L and recruiting L to the genomic N-RNA template for RNA synthesis. Also plays a central role in the encapsidation of nascent RNA chains by forming the encapsidation complex with the nucleocapsid protein N (N-P complex). Acts as a chaperone for newly synthesized free N protein, so-called N0, allowing encapsidation of nascent RNA chains during replication. The nucleoprotein protein N prevents excessive phosphorylation of P, which leads to down-regulation of viral transcription/ replication. Participates, together with N, in the formation of viral factories (viroplasms), which are large inclusions in the host cytoplasm where replication takes place. The sequence is that of Phosphoprotein from Homo sapiens (Human).